Reading from the N-terminus, the 136-residue chain is Secreted RxLR effector protein 63 (136 aa).

A signal peptide spans 1–21; sequence MQRFPYSLLLLLLSATNRSRR. Residues 43 to 46 carry the RxLR motif; that stretch reads RMLR.

The protein belongs to the RxLR effector family.

Its subcellular location is the secreted. The protein resides in the host nucleus. Effector that partially suppresses the tobacco programmed cell death induced by cell death-inducing proteins. The polypeptide is Secreted RxLR effector protein 63 (Plasmopara viticola (Downy mildew of grapevine)).